Reading from the N-terminus, the 261-residue chain is Thiamine thiazole synthase (261 aa).

Residues serine 40, 59–60 (ER), glycine 67, valine 133, and 159–161 (HVD) contribute to the NAD(+) site. The Fe cation site is built by aspartate 161 and histidine 176. NAD(+)-binding residues include serine 179 and methionine 226. Glycine is bound at residue arginine 236.

Belongs to the THI4 family. Homooctamer; tetramer of dimers. Requires Fe(2+) as cofactor.

It carries out the reaction hydrogen sulfide + glycine + NAD(+) = ADP-5-ethyl-4-methylthiazole-2-carboxylate + nicotinamide + 3 H2O + H(+). It functions in the pathway cofactor biosynthesis; thiamine diphosphate biosynthesis. Its function is as follows. Involved in the biosynthesis of the thiazole moiety of thiamine. Catalyzes the conversion of NAD and glycine to adenosine diphosphate 5-(2-hydroxyethyl)-4-methylthiazole-2-carboxylate (ADT), an adenylated thiazole intermediate, using free sulfide as a source of sulfur. This chain is Thiamine thiazole synthase, found in Methanococcus vannielii (strain ATCC 35089 / DSM 1224 / JCM 13029 / OCM 148 / SB).